The chain runs to 90 residues: Acylphosphatase (90 aa).

The region spanning 3–90 is the Acylphosphatase-like domain; that stretch reads KKQFIVYGLV…REFTDFSVRY (88 aa). Catalysis depends on residues Arg-18 and Asn-36.

The protein belongs to the acylphosphatase family.

It carries out the reaction an acyl phosphate + H2O = a carboxylate + phosphate + H(+). This chain is Acylphosphatase (acyP), found in Pasteurella multocida (strain Pm70).